Reading from the N-terminus, the 343-residue chain is Replication initiation protein (343 aa).

Positions glutamate 42–asparagine 61 are disordered.

Its function is as follows. Probably functions as an initiator for the IncI1 ColIb-P9 replicon. This Escherichia coli protein is Replication initiation protein (repZ).